Here is a 360-residue protein sequence, read N- to C-terminus: RNA-binding protein 1 (360 aa).

Positions 6-82 constitute an RRM 1 domain; it reads YKLFVGGIAK…KPVDVRKAIR (77 aa). Positions 93–113 form a coiled coil; it reads MQFLERKVQQMNGGLREMSSN. Positions 120–197 constitute an RRM 2 domain; the sequence is KKIFVGGLSS…KRVEVKRAIP (78 aa).

As to expression, highly expressed in inflorescences and roots. Detected in leaves and seedlings, but not in stems. Expressed in vegetative shoot apex and root meristem, but not in root cap. Detected in flower buds, junction of pedicels, joints of immature siliques and pistil.

In terms of biological role, RNA binding protein. Can also bind in vitro to single-stranded DNA. This is RNA-binding protein 1 (RBP1) from Arabidopsis thaliana (Mouse-ear cress).